The sequence spans 618 residues: tRNA 5-methylaminomethyl-2-thiouridine biosynthesis bifunctional protein MnmC (618 aa).

Positions 1–231 are tRNA (mnm(5)s(2)U34)-methyltransferase; the sequence is MLQTYAPIDF…KRHMLSAVYE (231 aa). Residues 256 to 618 form an FAD-dependent cmnm(5)s(2)U34 oxidoreductase region; the sequence is IGAGIAGATT…KDIIRGHLNN (363 aa).

It in the N-terminal section; belongs to the methyltransferase superfamily. tRNA (mnm(5)s(2)U34)-methyltransferase family. In the C-terminal section; belongs to the DAO family. FAD is required as a cofactor.

It localises to the cytoplasm. It catalyses the reaction 5-aminomethyl-2-thiouridine(34) in tRNA + S-adenosyl-L-methionine = 5-methylaminomethyl-2-thiouridine(34) in tRNA + S-adenosyl-L-homocysteine + H(+). Catalyzes the last two steps in the biosynthesis of 5-methylaminomethyl-2-thiouridine (mnm(5)s(2)U) at the wobble position (U34) in tRNA. Catalyzes the FAD-dependent demodification of cmnm(5)s(2)U34 to nm(5)s(2)U34, followed by the transfer of a methyl group from S-adenosyl-L-methionine to nm(5)s(2)U34, to form mnm(5)s(2)U34. This is tRNA 5-methylaminomethyl-2-thiouridine biosynthesis bifunctional protein MnmC from Dichelobacter nodosus (strain VCS1703A).